The following is a 500-amino-acid chain: Nuclear distribution protein PAC1 (500 aa).

WD repeat units lie at residues 125–164, 169–219, 225–265, 268–310, 338–378, 397–436, and 459–500; these read HNGH…EPQQ, AHTR…NLKA, GHEN…IVLS, GHSN…LMIG, QNEL…IRSD, EHKS…ESNL, and IKDQ…EYIL.

This sequence belongs to the WD repeat LIS1/nudF family. Self-associates. Interacts with NDL1 and dynein.

The protein resides in the cytoplasm. It is found in the cytoskeleton. Its subcellular location is the spindle pole. Positively regulates the activity of the minus-end directed microtubule motor protein dynein. Plays a central role in positioning the mitotic spindle at the bud neck during cell division. Targets cytoplasmic dynein to microtubule plus ends, thereby promoting dynein-mediated microtubule sliding along the bud cortex and consequently the movement of the mitotic spindle to the bud neck. The protein is Nuclear distribution protein PAC1 of Komagataella phaffii (strain GS115 / ATCC 20864) (Yeast).